A 394-amino-acid chain; its full sequence is Elongation factor Tu (394 aa).

The tr-type G domain maps to 10-204 (KPHINVGTIG…AMDNYIPIPE (195 aa)). The G1 stretch occupies residues 19 to 26 (GHVDHGKT). 19 to 26 (GHVDHGKT) lines the GTP pocket. Residue threonine 26 participates in Mg(2+) binding. The interval 60–64 (GITIN) is G2. Residues 81 to 84 (DCPG) form a G3 region. GTP is bound by residues 81 to 85 (DCPGH) and 136 to 139 (NKVD). The segment at 136-139 (NKVD) is G4. The interval 174 to 176 (SAL) is G5.

This sequence belongs to the TRAFAC class translation factor GTPase superfamily. Classic translation factor GTPase family. EF-Tu/EF-1A subfamily. In terms of assembly, monomer.

The protein resides in the cytoplasm. The enzyme catalyses GTP + H2O = GDP + phosphate + H(+). GTP hydrolase that promotes the GTP-dependent binding of aminoacyl-tRNA to the A-site of ribosomes during protein biosynthesis. This is Elongation factor Tu from Methylacidiphilum infernorum (isolate V4) (Methylokorus infernorum (strain V4)).